Consider the following 138-residue polypeptide: Endoribonuclease YbeY (138 aa).

The Zn(2+) site is built by H98, H102, and H108.

The protein belongs to the endoribonuclease YbeY family. Zn(2+) serves as cofactor.

The protein localises to the cytoplasm. Its function is as follows. Single strand-specific metallo-endoribonuclease involved in late-stage 70S ribosome quality control and in maturation of the 3' terminus of the 16S rRNA. This Thermosipho melanesiensis (strain DSM 12029 / CIP 104789 / BI429) protein is Endoribonuclease YbeY.